The sequence spans 217 residues: Small ribosomal subunit protein uS3 (217 aa).

The KH type-2 domain occupies Val38–Lys106.

It belongs to the universal ribosomal protein uS3 family. In terms of assembly, part of the 30S ribosomal subunit. Forms a tight complex with proteins S10 and S14.

Binds the lower part of the 30S subunit head. Binds mRNA in the 70S ribosome, positioning it for translation. The chain is Small ribosomal subunit protein uS3 from Lysinibacillus sphaericus (strain C3-41).